We begin with the raw amino-acid sequence, 227 residues long: Arginine ABC transporter permease protein ArtM (227 aa).

The region spanning 13–209 (IPTSLLLTVV…IITGIATLLL (197 aa)) is the ABC transmembrane type-1 domain. Helical transmembrane passes span 17-37 (LLLT…LTFL), 51-71 (LYLT…IYAG), 78-98 (IIDS…ALAL), 155-175 (IILV…DIMG), and 188-208 (LTIY…ATLL).

The protein belongs to the binding-protein-dependent transport system permease family. HisMQ subfamily. As to quaternary structure, the complex is composed of two ATP-binding proteins (ArtP), two transmembrane proteins (ArtM and ArtQ) and a solute-binding protein (ArtI).

It localises to the cell inner membrane. Its function is as follows. Part of the ABC transporter complex ArtPIQM involved in arginine transport. Probably responsible for the translocation of the substrate across the membrane. The sequence is that of Arginine ABC transporter permease protein ArtM (artM) from Haemophilus influenzae (strain ATCC 51907 / DSM 11121 / KW20 / Rd).